Reading from the N-terminus, the 219-residue chain is Adenylate kinase (219 aa).

10–15 (GAGKGT) is a binding site for ATP. The tract at residues 30-59 (STGDMLRAAVKAETPVGLEAKKVMDAGQLV) is NMP. Residues Thr31, Arg36, 57–59 (QLV), 85–88 (GFPR), and Gln92 each bind AMP. The segment at 122-159 (GRRVHLSSGRTYHVLFNPPKQEGLDDETGEPLVQRADD) is LID. ATP contacts are provided by residues Arg123 and 132–133 (TY). The AMP site is built by Arg156 and Arg167. Gly203 lines the ATP pocket.

Belongs to the adenylate kinase family. As to quaternary structure, monomer.

Its subcellular location is the cytoplasm. It carries out the reaction AMP + ATP = 2 ADP. The protein operates within purine metabolism; AMP biosynthesis via salvage pathway; AMP from ADP: step 1/1. Its function is as follows. Catalyzes the reversible transfer of the terminal phosphate group between ATP and AMP. Plays an important role in cellular energy homeostasis and in adenine nucleotide metabolism. This is Adenylate kinase from Chlorobium limicola (strain DSM 245 / NBRC 103803 / 6330).